The primary structure comprises 181 residues: Large ribosomal subunit protein uL5 (181 aa).

The protein belongs to the universal ribosomal protein uL5 family. Part of the 50S ribosomal subunit; part of the 5S rRNA/L5/L18/L25 subcomplex. Contacts the 5S rRNA and the P site tRNA. Forms a bridge to the 30S subunit in the 70S ribosome.

Its function is as follows. This is one of the proteins that bind and probably mediate the attachment of the 5S RNA into the large ribosomal subunit, where it forms part of the central protuberance. In the 70S ribosome it contacts protein S13 of the 30S subunit (bridge B1b), connecting the 2 subunits; this bridge is implicated in subunit movement. Contacts the P site tRNA; the 5S rRNA and some of its associated proteins might help stabilize positioning of ribosome-bound tRNAs. This is Large ribosomal subunit protein uL5 from Helicobacter pylori (strain Shi470).